Here is a 290-residue protein sequence, read N- to C-terminus: Eukaryotic translation initiation factor 3 subunit F-2 (290 aa).

The region spanning 12–150 is the MPN domain; it reads VRLQPLVLFQ…TRLYCGVTMG (139 aa).

The protein belongs to the eIF-3 subunit F family. In terms of assembly, component of the eukaryotic translation initiation factor 3 (eIF-3) complex. The eIF-3 complex interacts with pix.

It localises to the cytoplasm. In terms of biological role, component of the eukaryotic translation initiation factor 3 (eIF-3) complex, which is involved in protein synthesis of a specialized repertoire of mRNAs and, together with other initiation factors, stimulates binding of mRNA and methionyl-tRNAi to the 40S ribosome. The eIF-3 complex specifically targets and initiates translation of a subset of mRNAs involved in cell proliferation. In Drosophila virilis (Fruit fly), this protein is Eukaryotic translation initiation factor 3 subunit F-2.